We begin with the raw amino-acid sequence, 494 residues long: Tripartite motif-containing protein 5 (494 aa).

An N-acetylalanine modification is found at A2. The segment at 15-59 (CPICLELLTEPLSLDCGHSFCQACITANHKESTPHQGERSCPLCR) adopts an RING-type zinc-finger fold. A Phosphoserine modification is found at S86. The B box-type zinc finger occupies 91-132 (QKVGHCARHGEKLLLFCEQDGNVICWLCERSQEHRGHHTFLV). Zn(2+) is bound by residues C96, H99, C118, and H124. Residues 131-223 (LVEEVAEKYQ…RLVQSESDMA (93 aa)) are a coiled coil. The interval 186–199 (FKQLRDILDCEESK) is required for interaction with GABARAP and for autophagy. In terms of domain architecture, B30.2/SPRY spans 280 to 494 (PDLKGMLQAF…LPMTLCSPSS (215 aa)).

The protein belongs to the TRIM/RBCC family. Can form homodimers and homotrimers. In addition to lower-order dimerization, also exhibits a higher-order multimerization and both low- and high-order multimerizations are essential for its restriction activity. Interacts with BTBD1 and BTBD2. Interacts with PSMC4, PSMC5, PSMD7 and HSPA8/HSC70. Interacts (via B30.2/SPRY domain) with HSPA1A/B. Interacts with PSMC2, MAP3K7/TAK1, TAB2 and TAB3. Interacts with SQSTM1. Interacts with TRIM6 and TRIM34. Interacts with ULK1 (phosphorylated form), GABARAP, GABARAPL1, GABARAPL2, MAP1LC3A, MAP1LC3C and BECN1. Post-translationally, degraded in a proteasome-independent fashion in the absence of viral infection but in a proteasome-dependent fashion following exposure to restriction sensitive virus. In terms of processing, autoubiquitinated in a RING finger- and UBE2D2-dependent manner. Monoubiquitinated by TRIM21. Deubiquitinated by Yersinia YopJ. Ubiquitination may not lead to proteasomal degradation.

It is found in the cytoplasm. The protein resides in the nucleus. The enzyme catalyses S-ubiquitinyl-[E2 ubiquitin-conjugating enzyme]-L-cysteine + [acceptor protein]-L-lysine = [E2 ubiquitin-conjugating enzyme]-L-cysteine + N(6)-ubiquitinyl-[acceptor protein]-L-lysine.. The protein operates within protein modification; protein ubiquitination. Its function is as follows. Capsid-specific restriction factor that prevents infection from non-host-adapted retroviruses. Blocks viral replication early in the life cycle, after viral entry but before reverse transcription. In addition to acting as a capsid-specific restriction factor, also acts as a pattern recognition receptor that activates innate immune signaling in response to the retroviral capsid lattice. Binding to the viral capsid triggers its E3 ubiquitin ligase activity, and in concert with the heterodimeric ubiquitin conjugating enzyme complex UBE2V1-UBE2N (also known as UBC13-UEV1A complex) generates 'Lys-63'-linked polyubiquitin chains, which in turn are catalysts in the autophosphorylation of the MAP3K7/TAK1 complex (includes TAK1, TAB2, and TAB3). Activation of the MAP3K7/TAK1 complex by autophosphorylation results in the induction and expression of NF-kappa-B and MAPK-responsive inflammatory genes, thereby leading to an innate immune response in the infected cell. Plays a role in regulating autophagy through activation of autophagy regulator BECN1 by causing its dissociation from its inhibitors BCL2 and TAB2. In Saguinus oedipus (Cotton-top tamarin), this protein is Tripartite motif-containing protein 5 (TRIM5).